A 419-amino-acid chain; its full sequence is Putative zinc metalloprotease SPs1691 (419 aa).

His-18 lines the Zn(2+) pocket. Residue Glu-19 is part of the active site. His-22 is a Zn(2+) binding site. The next 4 membrane-spanning stretches (helical) occupy residues 169 to 191 (LITNFAGPMNNFILGIVVFILLV), 301 to 323 (LAWSGAFTILNALKGLITGFSLN), 343 to 365 (LESVLSLMAMLSINLGIFNLIPI), and 392 to 411 (AYITLAGVAIMVVLMIAVTW). One can recognise a PDZ domain in the interval 175–274 (GPMNNFILGI…LKTVAVKPQK (100 aa)).

This sequence belongs to the peptidase M50B family. Requires Zn(2+) as cofactor.

Its subcellular location is the cell membrane. The polypeptide is Putative zinc metalloprotease SPs1691 (eep) (Streptococcus pyogenes serotype M3 (strain SSI-1)).